Reading from the N-terminus, the 218-residue chain is Cytochrome b6 (218 aa).

The helical transmembrane segment at 35–55 threads the bilayer; it reads IFYCLGGITLVCFLVQFATGF. A heme c-binding site is contributed by cysteine 38. Positions 89 and 103 each coordinate heme b. 3 helical membrane passes run 93-113, 119-139, and 189-209; these read ASMM…TGGF, LTWV…VTGY, and LHTF…FLMI. The heme b site is built by histidine 190 and histidine 205.

This sequence belongs to the cytochrome b family. PetB subfamily. The 4 large subunits of the cytochrome b6-f complex are cytochrome b6, subunit IV (17 kDa polypeptide, PetD), cytochrome f and the Rieske protein, while the 4 small subunits are PetG, PetL, PetM and PetN. The complex functions as a dimer. Heme b is required as a cofactor. Requires heme c as cofactor.

Its subcellular location is the cellular thylakoid membrane. Its function is as follows. Component of the cytochrome b6-f complex, which mediates electron transfer between photosystem II (PSII) and photosystem I (PSI), cyclic electron flow around PSI, and state transitions. In Prochlorococcus marinus (strain MIT 9303), this protein is Cytochrome b6.